The sequence spans 292 residues: uncharacterized protein (292 aa).

Catalysis depends on charge relay system residues Ser44 and Tyr106. Tyr132 functions as the Proton donor in the catalytic mechanism. Lys161 acts as the Schiff-base intermediate with substrate in catalysis.

This sequence belongs to the DapA family. As to quaternary structure, homotetramer.

Its subcellular location is the cytoplasm. This is an uncharacterized protein from Thermoplasma acidophilum (strain ATCC 25905 / DSM 1728 / JCM 9062 / NBRC 15155 / AMRC-C165).